The sequence spans 224 residues: Cysteine-rich hydrophobic domain-containing protein 1 (224 aa).

The tract at residues 1 to 80 (MSILLPNMAE…PPPRVVSEEH (80 aa)) is disordered. Acidic residues predominate over residues 13 to 25 (TISELEEEEEEEA). The segment covering 26–40 (ATSSSSPSSSSSVSG) has biased composition (low complexity). Residues 41–69 (PDDDEEDEEEEEEEEEEEEEEEEEEEEEA) are compositionally biased toward acidic residues. A coiled-coil region spans residues 42–70 (DDDEEDEEEEEEEEEEEEEEEEEEEEEAP).

The protein belongs to the CHIC family. Palmitoylated. In terms of tissue distribution, equally expressed in various parts of the brain.

It is found in the cell membrane. It localises to the cytoplasmic vesicle. In Homo sapiens (Human), this protein is Cysteine-rich hydrophobic domain-containing protein 1 (CHIC1).